The chain runs to 513 residues: ATP synthase subunit alpha (513 aa).

Residue 169 to 176 (GDRQIGKT) coordinates ATP.

It belongs to the ATPase alpha/beta chains family. As to quaternary structure, F-type ATPases have 2 components, CF(1) - the catalytic core - and CF(0) - the membrane proton channel. CF(1) has five subunits: alpha(3), beta(3), gamma(1), delta(1), epsilon(1). CF(0) has three main subunits: a(1), b(2) and c(9-12). The alpha and beta chains form an alternating ring which encloses part of the gamma chain. CF(1) is attached to CF(0) by a central stalk formed by the gamma and epsilon chains, while a peripheral stalk is formed by the delta and b chains.

It is found in the cell inner membrane. It catalyses the reaction ATP + H2O + 4 H(+)(in) = ADP + phosphate + 5 H(+)(out). Produces ATP from ADP in the presence of a proton gradient across the membrane. The alpha chain is a regulatory subunit. This is ATP synthase subunit alpha from Shewanella woodyi (strain ATCC 51908 / MS32).